Here is a 508-residue protein sequence, read N- to C-terminus: Maturase K (508 aa).

Belongs to the intron maturase 2 family. MatK subfamily.

The protein localises to the plastid. It localises to the chloroplast. In terms of biological role, usually encoded in the trnK tRNA gene intron. Probably assists in splicing its own and other chloroplast group II introns. The sequence is that of Maturase K from Cunninghamia lanceolata (China fir).